The primary structure comprises 124 residues: Large ribosomal subunit protein bL20 (124 aa).

This sequence belongs to the bacterial ribosomal protein bL20 family.

Functionally, binds directly to 23S ribosomal RNA and is necessary for the in vitro assembly process of the 50S ribosomal subunit. It is not involved in the protein synthesizing functions of that subunit. The chain is Large ribosomal subunit protein bL20 from Gemmatimonas aurantiaca (strain DSM 14586 / JCM 11422 / NBRC 100505 / T-27).